The sequence spans 143 residues: Large ribosomal subunit protein uL11 (143 aa).

Belongs to the universal ribosomal protein uL11 family. As to quaternary structure, part of the ribosomal stalk of the 50S ribosomal subunit. Interacts with L10 and the large rRNA to form the base of the stalk. L10 forms an elongated spine to which L12 dimers bind in a sequential fashion forming a multimeric L10(L12)X complex. One or more lysine residues are methylated.

Its function is as follows. Forms part of the ribosomal stalk which helps the ribosome interact with GTP-bound translation factors. This Halorhodospira halophila (strain DSM 244 / SL1) (Ectothiorhodospira halophila (strain DSM 244 / SL1)) protein is Large ribosomal subunit protein uL11.